The chain runs to 591 residues: Aspartate--tRNA ligase (591 aa).

Residue E173 participates in L-aspartate binding. The tract at residues 197–200 (QLFK) is aspartate. R219 is a binding site for L-aspartate. ATP is bound by residues 219–221 (RDE) and Q228. L-aspartate is bound at residue H448. E482 is an ATP binding site. R489 contacts L-aspartate. 534 to 537 (GLDR) is a binding site for ATP.

This sequence belongs to the class-II aminoacyl-tRNA synthetase family. Type 1 subfamily. In terms of assembly, homodimer.

Its subcellular location is the cytoplasm. The enzyme catalyses tRNA(Asp) + L-aspartate + ATP = L-aspartyl-tRNA(Asp) + AMP + diphosphate. Catalyzes the attachment of L-aspartate to tRNA(Asp) in a two-step reaction: L-aspartate is first activated by ATP to form Asp-AMP and then transferred to the acceptor end of tRNA(Asp). The chain is Aspartate--tRNA ligase from Shewanella sp. (strain MR-7).